The sequence spans 363 residues: Cytochrome P450 CYP82D47 (363 aa).

Cys-342 serves as a coordination point for heme.

Belongs to the cytochrome P450 family. Heme is required as a cofactor.

In terms of biological role, probable heme-thiolate monooxygenase. This Panax ginseng (Korean ginseng) protein is Cytochrome P450 CYP82D47.